A 647-amino-acid chain; its full sequence is S-adenosyl-L-methionine-dependent tRNA 4-demethylwyosine synthase (647 aa).

One can recognise a Flavodoxin-like domain in the interval 50 to 198; it reads GKIFFISQTG…AFQDWCDGVI (149 aa). Residues 56–60 and 142–174 each bind FMN; these read SQTGT and VFGV…LEMI. The region spanning 316–559 is the Radical SAM core domain; it reads YGIESHRCME…LSLKSNGEYE (244 aa). 3 residues coordinate [4Fe-4S] cluster: Cys-332, Cys-336, and Cys-339.

The protein belongs to the TYW1 family. [4Fe-4S] cluster is required as a cofactor.

It catalyses the reaction N(1)-methylguanosine(37) in tRNA(Phe) + pyruvate + S-adenosyl-L-methionine = 4-demethylwyosine(37) in tRNA(Phe) + 5'-deoxyadenosine + L-methionine + CO2 + H2O. Its pathway is tRNA modification; wybutosine-tRNA(Phe) biosynthesis. Its function is as follows. Probable component of the wybutosine biosynthesis pathway. Wybutosine is a hyper modified guanosine with a tricyclic base found at the 3'-position adjacent to the anticodon of eukaryotic phenylalanine tRNA. Catalyzes the condensation of N-methylguanine with 2 carbon atoms from pyruvate to form the tricyclic 4-demethylwyosine, an intermediate in wybutosine biosynthesis. This is S-adenosyl-L-methionine-dependent tRNA 4-demethylwyosine synthase (TYW1) from Arabidopsis thaliana (Mouse-ear cress).